A 279-amino-acid chain; its full sequence is Shikimate dehydrogenase (NADP(+)) (279 aa).

Shikimate is bound by residues 20-22 (SRS) and Thr-67. The Proton acceptor role is filled by Lys-71. Asp-83 provides a ligand contact to NADP(+). Shikimate-binding residues include Asn-92 and Asp-108. NADP(+) contacts are provided by residues 134 to 138 (GAGGA) and Leu-223. A shikimate-binding site is contributed by Tyr-225. Gly-246 contacts NADP(+).

It belongs to the shikimate dehydrogenase family. Homodimer.

The enzyme catalyses shikimate + NADP(+) = 3-dehydroshikimate + NADPH + H(+). It participates in metabolic intermediate biosynthesis; chorismate biosynthesis; chorismate from D-erythrose 4-phosphate and phosphoenolpyruvate: step 4/7. Its function is as follows. Involved in the biosynthesis of the chorismate, which leads to the biosynthesis of aromatic amino acids. Catalyzes the reversible NADPH linked reduction of 3-dehydroshikimate (DHSA) to yield shikimate (SA). The polypeptide is Shikimate dehydrogenase (NADP(+)) (Cereibacter sphaeroides (strain KD131 / KCTC 12085) (Rhodobacter sphaeroides)).